An 86-amino-acid chain; its full sequence is UPF0297 protein CA_C1679 (86 aa).

Belongs to the UPF0297 family.

This is UPF0297 protein CA_C1679 from Clostridium acetobutylicum (strain ATCC 824 / DSM 792 / JCM 1419 / IAM 19013 / LMG 5710 / NBRC 13948 / NRRL B-527 / VKM B-1787 / 2291 / W).